The chain runs to 398 residues: O-methyltransferase aoiO (398 aa).

Aspartate 251 lines the S-adenosyl-L-methionine pocket. The active-site Proton acceptor is histidine 299.

The protein belongs to the class I-like SAM-binding methyltransferase superfamily. Cation-independent O-methyltransferase family.

Its function is as follows. O-methyltransferase; part of the gene cluster that mediates the biosynthesis of a methylated derivative of known natural products orthosporin and diaporthin. Seems not to be involved in the biosynthesis of the identified final product of the pathway and its function has still to be determined. The protein is O-methyltransferase aoiO of Aspergillus oryzae (strain ATCC 42149 / RIB 40) (Yellow koji mold).